We begin with the raw amino-acid sequence, 252 residues long: MQVKRWFLNNSLRNYQYLLYDENYAIVIDPLKADIFDEFIKQNTLKLEAILITHRHGDHIAGVKKLLEIYPDALVYAYADNELFKPNIYVADGDFVDFGFTSCKVMYTPGHIDDHVCFLFEKEKALFCGDTLFNAGVGGVHAASADVNQLYDSVVKISSLDGDIKPYPAHDYWQSNLDFALSILPNDESFNYYRNQVAELAAEHKPVVNLAEESKLNIFIRSISDKSLLQALPEYRLGREMFVKLRKLKNNF.

Residues His-54, His-56, Asp-58, His-59, His-111, Asp-130, and His-170 each contribute to the Zn(2+) site.

It belongs to the metallo-beta-lactamase superfamily. Glyoxalase II family. As to quaternary structure, monomer. The cofactor is Zn(2+).

It catalyses the reaction an S-(2-hydroxyacyl)glutathione + H2O = a 2-hydroxy carboxylate + glutathione + H(+). It functions in the pathway secondary metabolite metabolism; methylglyoxal degradation; (R)-lactate from methylglyoxal: step 2/2. Functionally, thiolesterase that catalyzes the hydrolysis of S-D-lactoyl-glutathione to form glutathione and D-lactic acid. In Francisella philomiragia subsp. philomiragia (strain ATCC 25017 / CCUG 19701 / FSC 153 / O#319-036), this protein is Hydroxyacylglutathione hydrolase.